The sequence spans 226 residues: V-type proton ATPase subunit E (226 aa).

The protein belongs to the V-ATPase E subunit family. V-ATPase is a heteromultimeric enzyme composed of a peripheral catalytic V1 complex (components A to H) attached to an integral membrane V0 proton pore complex (components: a, c, c', c'' and d).

Its function is as follows. Subunit of the peripheral V1 complex of vacuolar ATPase essential for assembly or catalytic function. V-ATPase is responsible for acidifying a variety of intracellular compartments in eukaryotic cells. This Mesembryanthemum crystallinum (Common ice plant) protein is V-type proton ATPase subunit E (VATE).